A 144-amino-acid polypeptide reads, in one-letter code: Large ribosomal subunit protein uL15 (144 aa).

Positions 1-45 (MNLNTLSPDPGSRPSRRRVGRGIGSGLGKTCGKGHKGQKSRAGGY) are disordered. Positions 21-31 (RGIGSGLGKTC) are enriched in gly residues.

Belongs to the universal ribosomal protein uL15 family. Part of the 50S ribosomal subunit.

Its function is as follows. Binds to the 23S rRNA. The protein is Large ribosomal subunit protein uL15 of Legionella pneumophila (strain Paris).